The chain runs to 80 residues: Conotoxin VnMSGL-0121 (80 aa).

The signal sequence occupies residues 1–20 (MSGLGIMVLTLLLLVSMATS). Positions 21–44 (HQDGGGKQATQRDAINVRRRRSIT) are excised as a propeptide. Disulfide bonds link cysteine 52/cysteine 65, cysteine 56/cysteine 74, and cysteine 64/cysteine 78. Phenylalanine amide is present on phenylalanine 79.

The protein belongs to the conotoxin O3 superfamily. As to expression, expressed by the venom duct.

The protein localises to the secreted. The protein is Conotoxin VnMSGL-0121 of Conus ventricosus (Mediterranean cone).